A 215-amino-acid chain; its full sequence is MATAEPETSTNPSNSEEKNEENEQQIVSLEDYIKHPLQNRWALWFFKNDKSKTWQANLRLISKFDTVEDFWALYNHIQLSSNLMSGCDYSLFKDGIEPMWEDERNKRGGRWLITLSKQQRRADLDRFWLETLLCLVGEAFDDHSDDVCGAVVNIRTKGDKIAIWTTDYENKDAIVHIGRVYKERLGVPPKVIIGYQSHADTATKSGSTTKNKFVV.

A compositionally biased stretch (low complexity) spans 1 to 14; that stretch reads MATAEPETSTNPSN. The segment at 1–23 is disordered; it reads MATAEPETSTNPSNSEEKNEENE. MRNA is bound by residues 54–55, 100–101, 155–160, and 203–205; these read WQ, WE, RTKGDK, and TKS.

Belongs to the eukaryotic initiation factor 4E family. Interacts with eif4ebp3l. Expressed in all tissues examined, including gill, fin, heart, intestine, muscle, ovary and testis.

The protein resides in the cytoplasm. It is found in the nucleus. Recognizes and binds the 7-methylguanosine (m7G)-containing mRNA cap during an early step in the initiation of protein synthesis and facilitates ribosome binding by inducing the unwinding of the mRNAs secondary structures. Also promotes export of a subset of mRNAs from the nucleus to the cytoplasm. The sequence is that of Eukaryotic translation initiation factor 4E-1A from Danio rerio (Zebrafish).